A 218-amino-acid polypeptide reads, in one-letter code: Hypoxanthine-guanine phosphoribosyltransferase (218 aa).

Position 2 is an N-acetylalanine (Ala2). GMP is bound at residue Lys69. Lys103 is subject to N6-acetyllysine. Residue Lys115 forms a Glycyl lysine isopeptide (Lys-Gly) (interchain with G-Cter in SUMO1); alternate linkage. Lys115 is covalently cross-linked (Glycyl lysine isopeptide (Lys-Gly) (interchain with G-Cter in SUMO2); alternate). GMP is bound by residues 134–142 (EDIIDTGKT), Lys166, 186–188 (KFV), and Asp194. Asp138 serves as the catalytic Proton acceptor. Thr142 carries the phosphothreonine modification. Asp194 serves as a coordination point for Mg(2+).

This sequence belongs to the purine/pyrimidine phosphoribosyltransferase family. In terms of assembly, homotetramer. Mg(2+) is required as a cofactor.

It is found in the cytoplasm. It catalyses the reaction IMP + diphosphate = hypoxanthine + 5-phospho-alpha-D-ribose 1-diphosphate. The enzyme catalyses GMP + diphosphate = guanine + 5-phospho-alpha-D-ribose 1-diphosphate. The protein operates within purine metabolism; IMP biosynthesis via salvage pathway; IMP from hypoxanthine: step 1/1. In terms of biological role, converts guanine to guanosine monophosphate, and hypoxanthine to inosine monophosphate. Transfers the 5-phosphoribosyl group from 5-phosphoribosylpyrophosphate onto the purine. Plays a central role in the generation of purine nucleotides through the purine salvage pathway. The sequence is that of Hypoxanthine-guanine phosphoribosyltransferase (HPRT1) from Cricetulus griseus (Chinese hamster).